The following is a 171-amino-acid chain: 3-hydroxydecanoyl-[acyl-carrier-protein] dehydratase (171 aa).

His70 is a catalytic residue.

It belongs to the thioester dehydratase family. FabA subfamily. As to quaternary structure, homodimer.

It is found in the cytoplasm. It carries out the reaction a (3R)-hydroxyacyl-[ACP] = a (2E)-enoyl-[ACP] + H2O. It catalyses the reaction (3R)-hydroxydecanoyl-[ACP] = (2E)-decenoyl-[ACP] + H2O. The catalysed reaction is (2E)-decenoyl-[ACP] = (3Z)-decenoyl-[ACP]. The protein operates within lipid metabolism; fatty acid biosynthesis. Necessary for the introduction of cis unsaturation into fatty acids. Catalyzes the dehydration of (3R)-3-hydroxydecanoyl-ACP to E-(2)-decenoyl-ACP and then its isomerization to Z-(3)-decenoyl-ACP. Can catalyze the dehydratase reaction for beta-hydroxyacyl-ACPs with saturated chain lengths up to 16:0, being most active on intermediate chain length. The protein is 3-hydroxydecanoyl-[acyl-carrier-protein] dehydratase of Nitrosococcus oceani (strain ATCC 19707 / BCRC 17464 / JCM 30415 / NCIMB 11848 / C-107).